A 364-amino-acid chain; its full sequence is MRLLGIETSCDETAAAVIEYNNESSSRILSNIVWSQIDHHAPYGGVVPEIAARAHVEILDHLILQALTEANTKLKDIDGIAATSGPGLIGGLLVGVMSAKALSLATGKPFIAVNHLEGHALTAVLTHNVKFPYLLLLVSGGHTQTILVHGVGNYQRLGTTIDDALGEAFDKTAKLLGLPYPGGPALEKAALLGDKNRIPLPRPLKGEKRLDFSFSGLKTAVRQAATAIAPLTENDVADIAASFQAAVTDTVRDRVHLALQHFTHQYPLSHDQEKHSPALVVAGGVAANQALRSTLQELAHQHGFEFIAPPLSLCTDNAAMIAFAGAQKLAQGETSSLDIAPRSRWPLDEKAIPLIGMGRRGTKA.

Fe cation-binding residues include H115 and H119. Residues 137 to 141, D170, G183, and N288 contribute to the substrate site; that span reads LVSGG. D316 lines the Fe cation pocket.

It belongs to the KAE1 / TsaD family. Requires Fe(2+) as cofactor.

The protein localises to the cytoplasm. It catalyses the reaction L-threonylcarbamoyladenylate + adenosine(37) in tRNA = N(6)-L-threonylcarbamoyladenosine(37) in tRNA + AMP + H(+). In terms of biological role, required for the formation of a threonylcarbamoyl group on adenosine at position 37 (t(6)A37) in tRNAs that read codons beginning with adenine. Is involved in the transfer of the threonylcarbamoyl moiety of threonylcarbamoyl-AMP (TC-AMP) to the N6 group of A37, together with TsaE and TsaB. TsaD likely plays a direct catalytic role in this reaction. The polypeptide is tRNA N6-adenosine threonylcarbamoyltransferase (Bartonella tribocorum (strain CIP 105476 / IBS 506)).